The following is a 254-amino-acid chain: 3-deoxy-manno-octulosonate cytidylyltransferase (254 aa).

This sequence belongs to the KdsB family.

It is found in the cytoplasm. It catalyses the reaction 3-deoxy-alpha-D-manno-oct-2-ulosonate + CTP = CMP-3-deoxy-beta-D-manno-octulosonate + diphosphate. It participates in nucleotide-sugar biosynthesis; CMP-3-deoxy-D-manno-octulosonate biosynthesis; CMP-3-deoxy-D-manno-octulosonate from 3-deoxy-D-manno-octulosonate and CTP: step 1/1. It functions in the pathway bacterial outer membrane biogenesis; lipopolysaccharide biosynthesis. Its function is as follows. Activates KDO (a required 8-carbon sugar) for incorporation into bacterial lipopolysaccharide in Gram-negative bacteria. The sequence is that of 3-deoxy-manno-octulosonate cytidylyltransferase from Chlamydia felis (strain Fe/C-56) (Chlamydophila felis).